The sequence spans 134 residues: Acyl carrier protein, chloroplastic (134 aa).

A chloroplast-targeting transit peptide spans 1-51; that stretch reads MATTFSASVSTLATSLATPTRISFQKPALVSRTNLSFNLRRSIPTRLSVSC. One can recognise a Carrier domain in the interval 55 to 130; it reads PETIEKVSKI…EAAELIEELV (76 aa). Ser90 bears the O-(pantetheine 4'-phosphoryl)serine mark.

It belongs to the acyl carrier protein (ACP) family. Post-translationally, 4'-phosphopantetheine is transferred from CoA to a specific serine of apo-ACP by acpS. This modification is essential for activity because fatty acids are bound in thioester linkage to the sulfhydryl of the prosthetic group. Seed.

It is found in the plastid. Its subcellular location is the chloroplast. It functions in the pathway lipid metabolism; fatty acid biosynthesis. Carrier of the growing fatty acid chain in fatty acid biosynthesis. The chain is Acyl carrier protein, chloroplastic (ACL1.A3) from Brassica napus (Rape).